We begin with the raw amino-acid sequence, 371 residues long: Ferrochelatase (371 aa).

Fe cation is bound by residues H218 and E299.

The protein belongs to the ferrochelatase family.

It is found in the cytoplasm. The enzyme catalyses heme b + 2 H(+) = protoporphyrin IX + Fe(2+). It participates in porphyrin-containing compound metabolism; protoheme biosynthesis; protoheme from protoporphyrin-IX: step 1/1. In terms of biological role, catalyzes the ferrous insertion into protoporphyrin IX. The chain is Ferrochelatase from Ralstonia nicotianae (strain ATCC BAA-1114 / GMI1000) (Ralstonia solanacearum).